The following is a 549-amino-acid chain: Chaperonin GroEL (549 aa).

ATP is bound by residues 29-32 (TLGP), Lys-50, 86-90 (DGTTT), Gly-413, 479-481 (NAA), and Asp-496. The tract at residues 522 to 549 (VSDKPEKPQQGGQGGGGMGGGDMGGMDF) is disordered. Over residues 532–549 (GGQGGGGMGGGDMGGMDF) the composition is skewed to gly residues.

The protein belongs to the chaperonin (HSP60) family. As to quaternary structure, forms a cylinder of 14 subunits composed of two heptameric rings stacked back-to-back. Interacts with the co-chaperonin GroES.

It localises to the cytoplasm. The enzyme catalyses ATP + H2O + a folded polypeptide = ADP + phosphate + an unfolded polypeptide.. Its function is as follows. Together with its co-chaperonin GroES, plays an essential role in assisting protein folding. The GroEL-GroES system forms a nano-cage that allows encapsulation of the non-native substrate proteins and provides a physical environment optimized to promote and accelerate protein folding. The sequence is that of Chaperonin GroEL from Deinococcus deserti (strain DSM 17065 / CIP 109153 / LMG 22923 / VCD115).